A 633-amino-acid polypeptide reads, in one-letter code: MWNMGLLFLIYYCVSIYSAKGDTKDGQVLPLDVGALAEDAGDAEANGEDTPERNSESSVLDTTLAFEPQASTQSTPIHGAVPTWRPKRDNCTPPAIEQFPQPLMNKWARQHGGLILHILVAVFTFFGLAIVCDEYFVASLDRLCEELKLSPDVAGATFMAAGSSAPELATVVIGVFFAKDDIGISGVIGSAVFNIMFVISVCALCSGTVCQLNWWPLVRDCFFYCVSILVMLIIIFNDVISCFESVVMLLCYVGYCVALHFNTELERWALGLNLPFKLPSKEEQSALVTYKNVPEGSYTQESVGQTQGQKATDDSETRSAKPQSDYQDYSDPNPTWDPNAAWGDESQPNPVANPPPVDDWGMGHSGQENMGYHADQPESVVTGDGPPAAVKSGGQVVSTQATSAGGNDYYKSTDKQREPRRDPLLRPMEGGLPALVSWYVVYPIHFLCKKTMPDCRQEQYRNWYPFTFLMSMVWISFYSYFMVWMITVIGSTLAIPDTVMGLTFVAAGVSVPDALSSIAVIKEGFGDMAVSNAIGSNVFDILVCLGLPWFIQTAIIKPGSHVNVISKGLAYSTLSLFSTVVFLILSTHLNGWKLDKRLGIILMVWYLFFITLASLYELNVFGYMNPPECPSTY.

Residues 1-21 (MWNMGLLFLIYYCVSIYSAKG) form the signal peptide. Residues 22–111 (DTKDGQVLPL…PLMNKWARQH (90 aa)) lie on the Extracellular side of the membrane. The helical transmembrane segment at 112 to 132 (GGLILHILVAVFTFFGLAIVC) threads the bilayer. The Cytoplasmic portion of the chain corresponds to 133–157 (DEYFVASLDRLCEELKLSPDVAGAT). The Alpha-1 repeat unit spans residues 153–193 (VAGATFMAAGSSAPELATVVIGVFFAKDDIGISGVIGSAVF). A helical membrane pass occupies residues 158-178 (FMAAGSSAPELATVVIGVFFA). Topologically, residues 179–181 (KDD) are extracellular. Residues 182-202 (IGISGVIGSAVFNIMFVISVC) traverse the membrane as a helical segment. Topologically, residues 203–220 (ALCSGTVCQLNWWPLVRD) are cytoplasmic. The next 2 helical transmembrane spans lie at 221–241 (CFFY…DVIS) and 242–262 (CFES…LHFN). Topologically, residues 263-427 (TELERWALGL…EPRRDPLLRP (165 aa)) are extracellular. Composition is skewed to polar residues over residues 298–310 (YTQE…QGQK), 320–333 (AKPQ…SDPN), and 395–405 (QVVSTQATSAG). The interval 298 to 422 (YTQESVGQTQ…TDKQREPRRD (125 aa)) is disordered. Residues 411-422 (KSTDKQREPRRD) show a composition bias toward basic and acidic residues. The chain crosses the membrane as a helical span at residues 428 to 448 (MEGGLPALVSWYVVYPIHFLC). The Cytoplasmic segment spans residues 449-468 (KKTMPDCRQEQYRNWYPFTF). The chain crosses the membrane as a helical span at residues 469–489 (LMSMVWISFYSYFMVWMITVI). Residues 490 to 500 (GSTLAIPDTVM) lie on the Extracellular side of the membrane. The helical transmembrane segment at 501 to 521 (GLTFVAAGVSVPDALSSIAVI) threads the bilayer. An Alpha-2 repeat occupies 506–537 (AAGVSVPDALSSIAVIKEGFGDMAVSNAIGSN). Residues 522-535 (KEGFGDMAVSNAIG) lie on the Cytoplasmic side of the membrane. The chain crosses the membrane as a helical span at residues 536–556 (SNVFDILVCLGLPWFIQTAII). Residues 557-568 (KPGSHVNVISKG) lie on the Extracellular side of the membrane. The helical transmembrane segment at 569–589 (LAYSTLSLFSTVVFLILSTHL) threads the bilayer. The Cytoplasmic portion of the chain corresponds to 590–597 (NGWKLDKR). Residues 598–618 (LGIILMVWYLFFITLASLYEL) form a helical membrane-spanning segment. At 619-633 (NVFGYMNPPECPSTY) the chain is on the extracellular side.

Belongs to the Ca(2+):cation antiporter (CaCA) (TC 2.A.19) family. SLC24A subfamily.

The protein resides in the membrane. Its function is as follows. May function in the removal and maintenance of calcium homeostasis. Transports one Ca(2+) and 1 K(+) in exchange for 4 Na(+). The chain is Probable sodium/potassium/calcium exchanger CG1090 from Drosophila melanogaster (Fruit fly).